A 357-amino-acid chain; its full sequence is Protein XRP2 (357 aa).

The segment covering 1 to 11 (MGCFFSKRRKP) has biased composition (basic residues). The disordered stretch occupies residues 1 to 39 (MGCFFSKRRKPAQGGQQQGASQEPAAGEEKAPQYSWDQR). A lipid anchor (N-myristoyl glycine) is attached at glycine 2. Residue cysteine 3 is the site of S-palmitoyl cysteine attachment. The span at 12–25 (AQGGQQQGASQEPA) shows a compositional bias: low complexity. Residues 32 to 186 (PQYSWDQRAK…TWSNIHDFTP (155 aa)) enclose the C-CAP/cofactor C-like domain. Residues 105–106 (GS) and 122–125 (QQFR) contribute to the GTP site.

This sequence belongs to the TBCC family. Post-translationally, myristoylated on Gly-2; which may be required for membrane targeting. Palmitoylated on Cys-3; which may be required for plasma membrane targeting.

It localises to the cell membrane. In terms of biological role, acts as a GTPase-activating protein (GAP) for tubulin in concert with tubulin-specific chaperone C, but does not enhance tubulin heterodimerization. Acts as a GTPase-activating protein. May act as guanine nucleotide dissociation inhibitor towards ADP-ribosylation factor-like proteins. The polypeptide is Protein XRP2 (RP2) (Gallus gallus (Chicken)).